A 294-amino-acid chain; its full sequence is NAD kinase (294 aa).

The active-site Proton acceptor is aspartate 73. Residues 73 to 74 (DG), 147 to 148 (NE), histidine 158, arginine 175, aspartate 177, 188 to 193 (TAYSLS), and glutamine 249 contribute to the NAD(+) site.

The protein belongs to the NAD kinase family. A divalent metal cation serves as cofactor.

The protein resides in the cytoplasm. The enzyme catalyses NAD(+) + ATP = ADP + NADP(+) + H(+). Functionally, involved in the regulation of the intracellular balance of NAD and NADP, and is a key enzyme in the biosynthesis of NADP. Catalyzes specifically the phosphorylation on 2'-hydroxyl of the adenosine moiety of NAD to yield NADP. The protein is NAD kinase of Aeromonas salmonicida (strain A449).